A 1426-amino-acid polypeptide reads, in one-letter code: DNA-directed RNA polymerase subunit beta' (1426 aa).

Zn(2+) is bound by residues cysteine 71, cysteine 73, cysteine 86, and cysteine 89. Positions 461, 463, and 465 each coordinate Mg(2+). Residues cysteine 814, cysteine 888, cysteine 895, and cysteine 898 each contribute to the Zn(2+) site. The disordered stretch occupies residues 1392 to 1426 (ADPIAAAESAIGLGGGEQPATSETGAGGSDPSEEG).

The protein belongs to the RNA polymerase beta' chain family. As to quaternary structure, the RNAP catalytic core consists of 2 alpha, 1 beta, 1 beta' and 1 omega subunit. When a sigma factor is associated with the core the holoenzyme is formed, which can initiate transcription. The cofactor is Mg(2+). Requires Zn(2+) as cofactor.

It catalyses the reaction RNA(n) + a ribonucleoside 5'-triphosphate = RNA(n+1) + diphosphate. Functionally, DNA-dependent RNA polymerase catalyzes the transcription of DNA into RNA using the four ribonucleoside triphosphates as substrates. This chain is DNA-directed RNA polymerase subunit beta', found in Alkalilimnicola ehrlichii (strain ATCC BAA-1101 / DSM 17681 / MLHE-1).